Reading from the N-terminus, the 498-residue chain is Lysine--tRNA ligase (498 aa).

Mg(2+)-binding residues include Glu-408 and Glu-415.

The protein belongs to the class-II aminoacyl-tRNA synthetase family. In terms of assembly, homodimer. Mg(2+) is required as a cofactor.

It is found in the cytoplasm. It carries out the reaction tRNA(Lys) + L-lysine + ATP = L-lysyl-tRNA(Lys) + AMP + diphosphate. This chain is Lysine--tRNA ligase, found in Listeria innocua serovar 6a (strain ATCC BAA-680 / CLIP 11262).